The primary structure comprises 560 residues: Glutamate--tRNA ligase, chloroplastic/mitochondrial (560 aa).

47–49 contacts L-glutamate; it reads RFA. The 'HIGH' region signature appears at 50–60; that stretch reads PSPTGNLHVGG. ATP is bound at residue H57. Residues E83, 235–239, and R253 each bind L-glutamate; that span reads YNFCV. ATP contacts are provided by residues E256 and 291–295; that span reads KLSKR. The 'KMSKS' region signature appears at 291–295; that stretch reads KLSKR.

The protein belongs to the class-I aminoacyl-tRNA synthetase family. Glutamate--tRNA ligase type 1 subfamily.

It is found in the plastid. It localises to the chloroplast. The protein localises to the mitochondrion. The catalysed reaction is tRNA(Glu) + L-glutamate + ATP = L-glutamyl-tRNA(Glu) + AMP + diphosphate. Its function is as follows. Catalyzes the attachment of glutamate to tRNA(Glu) in a two-step reaction: glutamate is first activated by ATP to form Glu-AMP and then transferred to the acceptor end of tRNA(Glu). The polypeptide is Glutamate--tRNA ligase, chloroplastic/mitochondrial (Hordeum vulgare (Barley)).